The sequence spans 148 residues: MQLILLEKVANLGNLGDKVNVKAGYGRNYLLPYGKATAATAANLAAFEERRAELEKAAADKKASAETRAAQLAELEVTITATAGDEGKLFGSIGTHDIADALTASGVEVQKSEVRLPNGTIRNVGEFDVAVHLHAEVEATVRVVVVAA.

The protein belongs to the bacterial ribosomal protein bL9 family.

Functionally, binds to the 23S rRNA. The chain is Large ribosomal subunit protein bL9 from Pseudomonas fluorescens (strain SBW25).